Consider the following 227-residue polypeptide: Probable cytokinin riboside 5'-monophosphate phosphoribohydrolase LOGL9 (227 aa).

Polar residues predominate over residues 1 to 15 (MYISSPHTSHFTSID). Residues 1-26 (MYISSPHTSHFTSIDRSPAVVSESDR) form a disordered region. Substrate contacts are provided by residues glutamate 117, 135–136 (RK), and 152–158 (GYGTLEE).

This sequence belongs to the LOG family. Expressed in roots, leaves and stems.

It catalyses the reaction N(6)-(dimethylallyl)adenosine 5'-phosphate + H2O = N(6)-dimethylallyladenine + D-ribose 5-phosphate. The enzyme catalyses 9-ribosyl-trans-zeatin 5'-phosphate + H2O = trans-zeatin + D-ribose 5-phosphate. Cytokinin-activating enzyme working in the direct activation pathway. Phosphoribohydrolase that converts inactive cytokinin nucleotides to the biologically active free-base forms. The chain is Probable cytokinin riboside 5'-monophosphate phosphoribohydrolase LOGL9 (LOGL9) from Oryza sativa subsp. japonica (Rice).